A 151-amino-acid polypeptide reads, in one-letter code: MKVVAVNAGFNVTLQMAYPPNDLLVELHNGLNTYGINWWHYFVPSLVNDDTPAGKLFASTLSKLSYYPRSGAHLDSHQSCSCSIGGTVDTELKVIGVENVRVTDLSAAPHPPGGNTWCTAAMIGARATDLILGKPLVANLPPEDVPVFTTS.

The protein belongs to the GMC oxidoreductase family.

The protein resides in the virion. The sequence is that of Putative truncated GMC-type inactive oxidoreductase L893 from Acanthamoeba polyphaga (Amoeba).